The chain runs to 185 residues: Elongation factor P (185 aa).

The protein belongs to the elongation factor P family.

Its subcellular location is the cytoplasm. It functions in the pathway protein biosynthesis; polypeptide chain elongation. Its function is as follows. Involved in peptide bond synthesis. Stimulates efficient translation and peptide-bond synthesis on native or reconstituted 70S ribosomes in vitro. Probably functions indirectly by altering the affinity of the ribosome for aminoacyl-tRNA, thus increasing their reactivity as acceptors for peptidyl transferase. The protein is Elongation factor P of Tropheryma whipplei (strain TW08/27) (Whipple's bacillus).